A 415-amino-acid polypeptide reads, in one-letter code: Serine--tRNA ligase (415 aa).

Residue 230–232 (TAE) participates in L-serine binding. 261-263 (RKE) contributes to the ATP binding site. Residue E284 participates in L-serine binding. 348–351 (EISS) contributes to the ATP binding site. S382 contributes to the L-serine binding site.

Belongs to the class-II aminoacyl-tRNA synthetase family. Type-1 seryl-tRNA synthetase subfamily. In terms of assembly, homodimer. The tRNA molecule binds across the dimer.

It is found in the cytoplasm. It carries out the reaction tRNA(Ser) + L-serine + ATP = L-seryl-tRNA(Ser) + AMP + diphosphate + H(+). The enzyme catalyses tRNA(Sec) + L-serine + ATP = L-seryl-tRNA(Sec) + AMP + diphosphate + H(+). Its pathway is aminoacyl-tRNA biosynthesis; selenocysteinyl-tRNA(Sec) biosynthesis; L-seryl-tRNA(Sec) from L-serine and tRNA(Sec): step 1/1. In terms of biological role, catalyzes the attachment of serine to tRNA(Ser). Is also able to aminoacylate tRNA(Sec) with serine, to form the misacylated tRNA L-seryl-tRNA(Sec), which will be further converted into selenocysteinyl-tRNA(Sec). The chain is Serine--tRNA ligase from Sulfurimonas denitrificans (strain ATCC 33889 / DSM 1251) (Thiomicrospira denitrificans (strain ATCC 33889 / DSM 1251)).